Here is a 194-residue protein sequence, read N- to C-terminus: UPF0301 protein BQ03640 (194 aa).

Belongs to the UPF0301 (AlgH) family.

In Bartonella quintana (strain Toulouse) (Rochalimaea quintana), this protein is UPF0301 protein BQ03640.